The following is a 131-amino-acid chain: Small ribosomal subunit protein uS8 (131 aa).

Belongs to the universal ribosomal protein uS8 family. In terms of assembly, part of the 30S ribosomal subunit. Contacts proteins S5 and S12.

One of the primary rRNA binding proteins, it binds directly to 16S rRNA central domain where it helps coordinate assembly of the platform of the 30S subunit. This Variovorax paradoxus (strain S110) protein is Small ribosomal subunit protein uS8.